The following is a 188-amino-acid chain: Ubiquitin-conjugating enzyme E2-21 kDa (188 aa).

The 180-residue stretch at 3–182 (STEKRLLKEY…VHYYIAKYSA (180 aa)) folds into the UBC core domain. Cysteine 119 functions as the Glycyl thioester intermediate in the catalytic mechanism.

This sequence belongs to the ubiquitin-conjugating enzyme family.

It carries out the reaction S-ubiquitinyl-[E1 ubiquitin-activating enzyme]-L-cysteine + [E2 ubiquitin-conjugating enzyme]-L-cysteine = [E1 ubiquitin-activating enzyme]-L-cysteine + S-ubiquitinyl-[E2 ubiquitin-conjugating enzyme]-L-cysteine.. It functions in the pathway protein modification; protein ubiquitination. Catalyzes the covalent attachment of ubiquitin to other proteins. Essential for peroxisome biogenesis. Required for UBC4-independent ubiquitination of PEX5. The polypeptide is Ubiquitin-conjugating enzyme E2-21 kDa (PEX4) (Pichia angusta (Yeast)).